The primary structure comprises 557 residues: Glutamyl-tRNA(Gln) amidotransferase subunit B, mitochondrial (557 aa).

Residues 1–41 (MAAPMLRWGCRGRRWAFARVDGGSCHRRGAPTGSTSNQIRG) constitute a mitochondrion transit peptide. The disordered stretch occupies residues 26–45 (HRRGAPTGSTSNQIRGESSV). The segment covering 32–45 (TGSTSNQIRGESSV) has biased composition (polar residues). Lysine 529 carries the post-translational modification N6-succinyllysine.

The protein belongs to the GatB/GatE family. GatB subfamily. Subunit of the heterotrimeric GatCAB amidotransferase (AdT) complex, composed of A (QRSL1), B (GATB) and C (GATC) subunits. Predominantly expressed in tissues characterized by high rates of oxidative phosphorylation (OxPhos), including muscle and heart.

It localises to the mitochondrion. It carries out the reaction L-glutamyl-tRNA(Gln) + L-glutamine + ATP + H2O = L-glutaminyl-tRNA(Gln) + L-glutamate + ADP + phosphate + H(+). Allows the formation of correctly charged Gln-tRNA(Gln) through the transamidation of misacylated Glu-tRNA(Gln) in the mitochondria. The reaction takes place in the presence of glutamine and ATP through an activated gamma-phospho-Glu-tRNA(Gln). The protein is Glutamyl-tRNA(Gln) amidotransferase subunit B, mitochondrial of Homo sapiens (Human).